A 63-amino-acid polypeptide reads, in one-letter code: MNNKINNIKITQVKSAIGHKYDQRLTLIGLGLNKMNKSVILENTNSIKGMVNKVKHLLKIENM.

Belongs to the universal ribosomal protein uL30 family. Part of the 50S ribosomal subunit.

This chain is Large ribosomal subunit protein uL30, found in Rickettsia akari (strain Hartford).